The following is an 81-amino-acid chain: Three-finger toxin A1 (81 aa).

An N-terminal signal peptide occupies residues 1–21; it reads MKTLLLTLVVVTIVCLDFGHT. 4 cysteine pairs are disulfide-bonded: Cys24-Cys43, Cys38-Cys60, Cys62-Cys73, and Cys74-Cys79.

Belongs to the three-finger toxin family. Short-chain subfamily. Type I alpha-neurotoxin sub-subfamily. Expressed by the venom gland.

The protein localises to the secreted. Binds and inhibits fetal (alpha-1-beta-1-gamma-delta/CHRNA1-CHRNB1-CHRNG-CHRND, IC(50)=1.4 nM), adult (alpha-1-beta-1-delta-epsilon/CHRNA1-CHRNB1-CHRND-CHRNE, IC(50)=12 nM) and neuronal alpha-7/CHRNA7 (IC(50)=400 nM) nicotinic acetylcholine receptors (nAChR) thereby impairing neuromuscular and neuronal transmissions. The protein is Three-finger toxin A1 of Micrurus laticollaris (Balsas coral snake).